The chain runs to 490 residues: Hippocampus abundant transcript 1 protein (490 aa).

Methionine 1 is subject to N-acetylmethionine. Over 1–40 the chain is Extracellular; that stretch reads MTQGKKKKRAANRSIMLAKKIIIKDGGTPQGIGSPSVYHA. A glycan (N-linked (GlcNAc...) asparagine) is linked at asparagine 12. A helical membrane pass occupies residues 41–61; it reads VIVIFLEFFAWGLLTAPTLVV. Residues 62-74 are Cytoplasmic-facing; the sequence is LHETFPKHTFLMN. The helical transmembrane segment at 75 to 95 threads the bilayer; sequence GLIQGVKGLLSFLSAPLIGAL. Over 96 to 103 the chain is Extracellular; that stretch reads SDVWGRKS. A helical transmembrane segment spans residues 104-124; that stretch reads FLLLTVFFTCAPIPLMKISPW. At 125–126 the chain is on the cytoplasmic side; sequence WY. Residues 127–147 form a helical membrane-spanning segment; it reads FAVISVSGVFAVTFSVVFAYV. At 148–160 the chain is on the extracellular side; that stretch reads ADITQEHERSMAY. A helical membrane pass occupies residues 161–181; that stretch reads GLVSATFAASLVTSPAIGAYL. The Cytoplasmic portion of the chain corresponds to 182–188; it reads GRVYGDS. The chain crosses the membrane as a helical span at residues 189–209; that stretch reads LVVVLATAIALLDICFILVAV. Residues 210–243 lie on the Extracellular side of the membrane; it reads PESLPEKMRPASWGAPISWEQADPFASLKKVGQD. The chain crosses the membrane as a helical span at residues 244 to 264; it reads SIVLLICITVFLSYLPEAGQY. The Cytoplasmic segment spans residues 265–284; that stretch reads SSFFLYLRQIMKFSPESVAA. Residues 285-305 traverse the membrane as a helical segment; it reads FIAVLGILSIIAQTIVLSLLM. Residues 306 to 313 lie on the Extracellular side of the membrane; the sequence is RSIGNKNT. The helical transmembrane segment at 314 to 334 threads the bilayer; that stretch reads ILLGLGFQILQLAWYGFGSEP. Topologically, residues 335–337 are cytoplasmic; it reads WMM. A helical membrane pass occupies residues 338–358; sequence WAAGAVAAMSSITFPAVSALV. Over 359 to 379 the chain is Extracellular; sequence SRTADADQQGVVQGMITGIRG. The chain crosses the membrane as a helical span at residues 380–400; that stretch reads LCNGLGPALYGFIFYIFHVEL. Over 401-427 the chain is Cytoplasmic; the sequence is KELPITGTDLGTNTSPQHHFEQNSIIP. A helical transmembrane segment spans residues 428–448; the sequence is GPPFLFGACSVLLALLVALFI. Residues 449–490 lie on the Extracellular side of the membrane; it reads PEHTNLSLRSSSWRKHCGSHSHPHSTQAPGEAKEPLLQDTNV. Asparagine 453 is a glycosylation site (N-linked (GlcNAc...) asparagine). Positions 466 to 490 are disordered; sequence GSHSHPHSTQAPGEAKEPLLQDTNV.

Belongs to the major facilitator superfamily. Expressed in various tissues.

Its subcellular location is the membrane. The protein is Hippocampus abundant transcript 1 protein of Mus musculus (Mouse).